We begin with the raw amino-acid sequence, 425 residues long: Histone-binding protein RBBP7 (425 aa).

WD repeat units follow at residues 47 to 122 (QWLP…KINH), 128 to 173 (RARY…LRLR), 181 to 217 (GLSWNSNLSGHLLSASDDHTVCLWDISAGPKEGKVVD), 228 to 269 (VVED…HSVD), 275 to 312 (VNCLSFNPYSEFILATGSADKTVALWDLRNLKLKLHSF), 318 to 369 (EIFQ…LFIH), and 376 to 403 (ISDFSWNPNEPWVICSVSEDNIMQIWQM).

It belongs to the WD repeat RBAP46/RBAP48/MSI1 family. Binds directly to helix 1 of the histone fold of histone H4, a region that is not accessible when H4 is in chromatin.

The protein localises to the nucleus. Functionally, core histone-binding subunit that may target chromatin remodeling factors, histone acetyltransferases and histone deacetylases to their histone substrates in a manner that is regulated by nucleosomal DNA. Component of several complexes which regulate chromatin metabolism. The polypeptide is Histone-binding protein RBBP7 (rbbp7) (Xenopus tropicalis (Western clawed frog)).